The chain runs to 321 residues: Large ribosomal RNA subunit accumulation protein YCED homolog 1, chloroplastic (321 aa).

A chloroplast-targeting transit peptide spans 1–32 (MSLVCSLSCVAPLPQTKQSRPSFLKLETCTLS).

Belongs to the DUF177 domain family.

The protein resides in the plastid. It localises to the chloroplast stroma. Its subcellular location is the chloroplast nucleoid. Functionally, plays a role in synthesis, processing and/or stability of 23S rRNA. Required for embryogenesis. This Arabidopsis thaliana (Mouse-ear cress) protein is Large ribosomal RNA subunit accumulation protein YCED homolog 1, chloroplastic.